We begin with the raw amino-acid sequence, 403 residues long: MSTEHTNTPRADSPQSAAEAVRGARQHAPAATPAESDPILELAEAMEGPLRIPAHTPEAVRDTVASLEKRLIGGQREFRRREVASEAGVSLHSARKLWRAIGFPELSDDEVFFTEADKKALGTMVGMVREGALTEETAISLMRSVGQMTDRMVVWQIEALVEDMIANQNLSDRQARRQLFSLLPEIIPAIEDLLLYSWRRQLNSAVHRMALRVETGVAAYNQDRGEDDGGTPLPLARAVGFADLVSYTSLSRRMNERTLAQLVQRFEAKCAEIISVGGGRLVKTIGDEVLYVAETPQAGAQIALSLSRELAKDELFPQTRGAVVWGRLLSRLGDIYGPTVNMAARLTSLAEPGTVLTDAITANTLRNDARFVLTAQEITAVRGFGDIQPYELSAGEGAGLVID.

The segment covering 1-16 has biased composition (polar residues); the sequence is MSTEHTNTPRADSPQS. The disordered stretch occupies residues 1–37; sequence MSTEHTNTPRADSPQSAAEAVRGARQHAPAATPAESD. Positions 31–60 are pyruvate binding; it reads ATPAESDPILELAEAMEGPLRIPAHTPEAV. Positions 238-347 constitute a Guanylate cyclase domain; sequence AVGFADLVSY…PTVNMAARLT (110 aa). The Mg(2+) site is built by D243 and D287.

Belongs to the adenylyl cyclase class-3 family. As to quaternary structure, homodimer. Requires Mg(2+) as cofactor.

It localises to the cytoplasm. The catalysed reaction is ATP = 3',5'-cyclic AMP + diphosphate. With respect to regulation, pyruvate-stimulated. In terms of biological role, plays essential roles in regulation of cellular metabolism by catalyzing the synthesis of a second messenger, cAMP. The sequence is that of Adenylate cyclase (cya) from Glutamicibacter nicotianae (Arthrobacter nicotianae).